We begin with the raw amino-acid sequence, 312 residues long: Taste receptor type 2 member 140 (312 aa).

Topologically, residues 1–9 (MKVTVECAL) are extracellular. The chain crosses the membrane as a helical span at residues 10-30 (LITLIVEIIIGCLGNGFIAVV). The Cytoplasmic portion of the chain corresponds to 31–46 (NIMDWTKRRRFSLVDQ). Residues 47-67 (ILTALAISRLAFVWSLLTVLV) form a helical membrane-spanning segment. Residues 68–87 (ISELHSSLLITRKMLRIINN) are Extracellular-facing. Residues 88–108 (FWTVTNHFSIWLATCLSIFYF) form a helical membrane-spanning segment. At 109 to 133 (LKIANFSNSIFLSLRWRVKTVVSLT) the chain is on the cytoplasmic side. Residues 134–154 (LLVSLLLLLVNVIIINTCIVI) form a helical membrane-spanning segment. At 155–185 (SVEGYKVNMSYSSHFNNNPQISRIPLFTNTM) the chain is on the extracellular side. N162 carries N-linked (GlcNAc...) asparagine glycosylation. The chain crosses the membrane as a helical span at residues 186–206 (FTFIPFTVTLTIFLLLIFSLW). Residues 207–229 (RHLKKMQHRAKGPRDPSTTAHIK) are Cytoplasmic-facing. A helical membrane pass occupies residues 230 to 250 (ALQMVVTFLFLYTIFFLALVM). At 251–264 (QAWNNEIQSKTVFN) the chain is on the extracellular side. The chain crosses the membrane as a helical span at residues 265 to 285 (LVFESIALAFPSGHSCVLILG). Topologically, residues 286-312 (NSKLRQAFLTIIWWLRSSFNAAELSSP) are cytoplasmic.

Belongs to the G-protein coupled receptor T2R family.

The protein localises to the membrane. Putative taste receptor which may play a role in the perception of bitterness. The sequence is that of Taste receptor type 2 member 140 from Rattus norvegicus (Rat).